Consider the following 35-residue polypeptide: U1-theraphotoxin-Hhn1a (35 aa).

Cystine bridges form between Cys-2–Cys-16, Cys-9–Cys-21, and Cys-15–Cys-28.

This sequence belongs to the neurotoxin 10 (Hwtx-1) family. 24 (Hwtx-6) subfamily. In terms of tissue distribution, expressed by the venom gland.

It is found in the secreted. Functionally, gating-modifier toxin that dose-dependently inhibits inactivation of voltage-gated sodium channels and reduces the peak of sodium current in cockroach DUM neurons. In vivo, reversibly paralyzes cockroaches for several hours, paralyzes rat after intracerebroventricular injection and blocks the neuromuscular transmission of the isolated rat phrenic nerve-diaphragm preparation. The chain is U1-theraphotoxin-Hhn1a from Cyriopagopus hainanus (Chinese bird spider).